A 267-amino-acid chain; its full sequence is 2-oxoglutarate synthase subunit KorB (267 aa).

As to quaternary structure, heterotetramer of the KorA, KorB, KorC and KorD subunits.

The catalysed reaction is 2 oxidized [2Fe-2S]-[ferredoxin] + 2-oxoglutarate + CoA = succinyl-CoA + 2 reduced [2Fe-2S]-[ferredoxin] + CO2 + H(+). The sequence is that of 2-oxoglutarate synthase subunit KorB (korB) from Archaeoglobus fulgidus (strain ATCC 49558 / DSM 4304 / JCM 9628 / NBRC 100126 / VC-16).